We begin with the raw amino-acid sequence, 320 residues long: Ribosomal RNA small subunit methyltransferase H (320 aa).

S-adenosyl-L-methionine-binding positions include 42–44 (GGH), aspartate 62, phenylalanine 86, aspartate 108, and glutamine 115.

Belongs to the methyltransferase superfamily. RsmH family.

It is found in the cytoplasm. It carries out the reaction cytidine(1402) in 16S rRNA + S-adenosyl-L-methionine = N(4)-methylcytidine(1402) in 16S rRNA + S-adenosyl-L-homocysteine + H(+). In terms of biological role, specifically methylates the N4 position of cytidine in position 1402 (C1402) of 16S rRNA. The protein is Ribosomal RNA small subunit methyltransferase H of Yersinia pseudotuberculosis serotype O:1b (strain IP 31758).